A 127-amino-acid polypeptide reads, in one-letter code: Large ribosomal subunit protein bL19 (127 aa).

It belongs to the bacterial ribosomal protein bL19 family.

Functionally, this protein is located at the 30S-50S ribosomal subunit interface and may play a role in the structure and function of the aminoacyl-tRNA binding site. This is Large ribosomal subunit protein bL19 from Cupriavidus pinatubonensis (strain JMP 134 / LMG 1197) (Cupriavidus necator (strain JMP 134)).